Reading from the N-terminus, the 434-residue chain is MDEGGGIGSSLLSRITTTASEIMMRNEPTTTENPAVQEMNHIYHLTPSMKMLCILFYSILCVCCVYGNVLVILVIVYFKRLRTATNILILNLAVADLLISVFCIPFSYWQVLIYDDQRWLFGSMMCSLLAFLQAMAVFLSAWTLVVISFDRWMAIMFLLTPNIRITRRRALYLVAATWIFSILMALPLLFTTRFFEDQDGLPNCGENWTYFGDSGEQVRKVYSSMVLILQYVVPQAVLIITYTHIGIKMWNSRVPGMQNGATKKMIVDRHESVKKLVPMVILISALFALCWLPLLILINVIPEFYPDINSWGYILYLWWFAHGLAMSHSMVNPIIYFIRNARFREGFCFFSSKLLPCISFKELRLLTDNTSRSFRNRSRFSGVINPTSSDEKPATSLTRYSRSGVLDRQTCRSARFFEARPLVVVRNNSANSLA.

The Extracellular segment spans residues 1 to 55 (MDEGGGIGSSLLSRITTTASEIMMRNEPTTTENPAVQEMNHIYHLTPSMKMLCIL). Residues 56 to 76 (FYSILCVCCVYGNVLVILVIV) traverse the membrane as a helical segment. The Cytoplasmic portion of the chain corresponds to 77 to 86 (YFKRLRTATN). Residues 87–107 (ILILNLAVADLLISVFCIPFS) traverse the membrane as a helical segment. Topologically, residues 108–128 (YWQVLIYDDQRWLFGSMMCSL) are extracellular. Cys-126 and Cys-204 are oxidised to a cystine. Residues 129–149 (LAFLQAMAVFLSAWTLVVISF) traverse the membrane as a helical segment. The Cytoplasmic segment spans residues 150 to 169 (DRWMAIMFLLTPNIRITRRR). A helical transmembrane segment spans residues 170–190 (ALYLVAATWIFSILMALPLLF). At 191–226 (TTRFFEDQDGLPNCGENWTYFGDSGEQVRKVYSSMV) the chain is on the extracellular side. Asn-207 carries an N-linked (GlcNAc...) asparagine glycan. The chain crosses the membrane as a helical span at residues 227 to 247 (LILQYVVPQAVLIITYTHIGI). Over 248–277 (KMWNSRVPGMQNGATKKMIVDRHESVKKLV) the chain is Cytoplasmic. Residues 278-298 (PMVILISALFALCWLPLLILI) form a helical membrane-spanning segment. Topologically, residues 299-310 (NVIPEFYPDINS) are extracellular. A helical membrane pass occupies residues 311–331 (WGYILYLWWFAHGLAMSHSMV). At 332 to 434 (NPIIYFIRNA…VRNNSANSLA (103 aa)) the chain is on the cytoplasmic side.

Belongs to the G-protein coupled receptor 1 family. Expressed in many cells, mainly in the head region, with expression detected in the head muscles, I2 neurons, MC neurons, RIH neuron, AIA neurons, AUA neurons, ASK neurons, ASI neurons, a few B-type motorneurons in the posterior ventral nerve cord, pharyngeal muscles, body wall muscles, the intestine and a few classes of unidentified cells anterior to the nerve ring. Expression in the MC neurons is important to mediate suppression of feeding while expression in the RIH neuron is important for the facilitation of egg-laying. No expression detected in other tissues including hypodermis.

It is found in the cell membrane. In terms of biological role, receptor for the LURY-1-1 and LURY-1-2 peptides which control food-related processes including feeding, lifespan, egg-laying and roaming behavior. Receptor for flp-7 which stimulates serotonin-induced fat loss. Serotonin induces secretion of flp-7 from neurons and binding to npr-22 which leads to induction of the atgp-1 lipase and subsequent fat loss. Acts in vitro as a receptor for the flp-7 FMRFamide-like neuropeptides TPMQRSSMVRF-amide, SPMQRSSMVRF-amide, SPMERSAMVRF-amide and SPMDRSKMVRF-amide. Also acts in vitro as a receptor for a number of other FMRFamide-like neuropeptides including the flp-1 neuropeptide PNFMRY-amide, the flp-9 neuropeptide KPSFVRF-amide, the flp-11 neuropeptides AMRNALVRF-amide, ASGGMRNALVRF-amide and NGAPQPFVRF-amide, the flp-13 neuropeptides AADGAPLIRF-amide, ASPSAPLIRF-amide, SPSAVPLIRF-amide, SAAAPLIRF-amide and ASSAPLIRF-amide, and the flp-22 neuropeptide SPSAKWMRF-amide. The SPMERSAMVRF-amide neuropeptide from flp-7 acts as the strongest in vitro activator of npr-22. The chain is Neuropeptide receptor 22 from Caenorhabditis elegans.